A 98-amino-acid chain; its full sequence is MDQFEAAYESYKARQTTADQENVPSGKEEIIAVRRNEEDNIIAVKTNTGRELDYPTALSEAKSGKLAHVDVFHKYGRDILRSEPDGIKENNLSELPDF.

This is an uncharacterized protein from Bacillus subtilis (strain 168).